The following is a 362-amino-acid chain: Adenosine deaminase (362 aa).

Zn(2+)-binding residues include histidine 41 and histidine 43. 43–45 (HLD) provides a ligand contact to a purine D-ribonucleoside. The tract at residues 169–183 (IGETGISEESLRKAA) is gating helix loop; regulates binding affinity for substrates and thus substrate selectivity. Residue glycine 200 coordinates a purine D-ribonucleoside. Histidine 225 contacts Zn(2+). A purine D-ribonucleoside-binding residues include glutamate 228, histidine 252, and aspartate 309. Residue aspartate 309 participates in Zn(2+) binding.

It belongs to the metallo-dependent hydrolases superfamily. Adenosine and AMP deaminases family. Zn(2+) serves as cofactor.

It carries out the reaction adenosine + H2O + H(+) = inosine + NH4(+). It participates in purine metabolism; purine nucleoside salvage. With respect to regulation, inhibited by coformycin but not by methylthiocoformycin (MT-coformycin). Catalyzes the hydrolytic deamination of adenosine to produce inosine. Unlike other Plasmodium adenosine deaminases, does not catalyze the deamination of 5'-methylthioadenosine (MTA). Plays an essential role in the purine salvage pathway which allows the parasite to use host cell purines for the synthesis of nucleic acids. The sequence is that of Adenosine deaminase from Plasmodium gallinaceum.